A 351-amino-acid chain; its full sequence is S-adenosylmethionine:tRNA ribosyltransferase-isomerase (351 aa).

This sequence belongs to the QueA family. As to quaternary structure, monomer.

It localises to the cytoplasm. The enzyme catalyses 7-aminomethyl-7-carbaguanosine(34) in tRNA + S-adenosyl-L-methionine = epoxyqueuosine(34) in tRNA + adenine + L-methionine + 2 H(+). It participates in tRNA modification; tRNA-queuosine biosynthesis. Functionally, transfers and isomerizes the ribose moiety from AdoMet to the 7-aminomethyl group of 7-deazaguanine (preQ1-tRNA) to give epoxyqueuosine (oQ-tRNA). The sequence is that of S-adenosylmethionine:tRNA ribosyltransferase-isomerase from Roseobacter denitrificans (strain ATCC 33942 / OCh 114) (Erythrobacter sp. (strain OCh 114)).